The primary structure comprises 301 residues: HPr kinase/phosphorylase (301 aa).

Catalysis depends on residues H134 and K155. 149 to 156 (GKSGLGKS) is a binding site for ATP. Residue S156 coordinates Mg(2+). Residue D173 is the Proton acceptor; for phosphorylation activity. Proton donor; for dephosphorylation activity of the active site. The segment at 196 to 205 (LEVRGLGIIN) is important for the catalytic mechanism of both phosphorylation and dephosphorylation. Position 197 (E197) interacts with Mg(2+). Residue R239 is part of the active site. Residues 260–265 (PITPGK) form an important for the catalytic mechanism of dephosphorylation region.

Belongs to the HPrK/P family. In terms of assembly, homohexamer. Mg(2+) serves as cofactor.

It carries out the reaction [HPr protein]-L-serine + ATP = [HPr protein]-O-phospho-L-serine + ADP + H(+). The enzyme catalyses [HPr protein]-O-phospho-L-serine + phosphate + H(+) = [HPr protein]-L-serine + diphosphate. Catalyzes the ATP- as well as the pyrophosphate-dependent phosphorylation of a specific serine residue in HPr, a phosphocarrier protein of the phosphoenolpyruvate-dependent sugar phosphotransferase system (PTS). HprK/P also catalyzes the pyrophosphate-producing, inorganic phosphate-dependent dephosphorylation (phosphorolysis) of seryl-phosphorylated HPr (P-Ser-HPr). The two antagonistic activities of HprK/P are regulated by several intracellular metabolites, which change their concentration in response to the absence or presence of rapidly metabolisable carbon sources (glucose, fructose, etc.) in the growth medium. Therefore, by controlling the phosphorylation state of HPr, HPrK/P is a sensor enzyme that plays a major role in the regulation of carbon metabolism and sugar transport: it mediates carbon catabolite repression (CCR), and regulates PTS-catalyzed carbohydrate uptake and inducer exclusion. This Malacoplasma penetrans (strain HF-2) (Mycoplasma penetrans) protein is HPr kinase/phosphorylase.